We begin with the raw amino-acid sequence, 470 residues long: Membrane-bound lytic murein transglycosylase F (470 aa).

An N-terminal signal peptide occupies residues 1-21 (MLKEKLIIIITLVMLLCACDI). The segment at 22 to 259 (QEQSTQLAQI…VLEEKYFGHV (238 aa)) is non-LT domain. The interval 260 to 470 (RQFNYVNTLA…PKIGDEVEAK (211 aa)) is LT domain. E304 is a catalytic residue.

This sequence in the N-terminal section; belongs to the bacterial solute-binding protein 3 family. In the C-terminal section; belongs to the transglycosylase Slt family.

It localises to the cell outer membrane. It carries out the reaction Exolytic cleavage of the (1-&gt;4)-beta-glycosidic linkage between N-acetylmuramic acid (MurNAc) and N-acetylglucosamine (GlcNAc) residues in peptidoglycan, from either the reducing or the non-reducing ends of the peptidoglycan chains, with concomitant formation of a 1,6-anhydrobond in the MurNAc residue.. Functionally, murein-degrading enzyme that degrades murein glycan strands and insoluble, high-molecular weight murein sacculi, with the concomitant formation of a 1,6-anhydromuramoyl product. Lytic transglycosylases (LTs) play an integral role in the metabolism of the peptidoglycan (PG) sacculus. Their lytic action creates space within the PG sacculus to allow for its expansion as well as for the insertion of various structures such as secretion systems and flagella. This Pseudoalteromonas translucida (strain TAC 125) protein is Membrane-bound lytic murein transglycosylase F.